We begin with the raw amino-acid sequence, 413 residues long: Probable glucan 1,3-beta-glucosidase ARB_04467 (413 aa).

A signal peptide spans 1 to 17 (MKFGSLLGLSLVGLSVA). The substrate site is built by E46, E202, and Y262. Catalysis depends on E202, which acts as the Proton donor. C282 and C412 are oxidised to a cystine. Catalysis depends on E300, which acts as the Nucleophile.

Belongs to the glycosyl hydrolase 5 (cellulase A) family. As to quaternary structure, monomer.

The protein localises to the secreted. The protein resides in the cell wall. The catalysed reaction is Successive hydrolysis of beta-D-glucose units from the non-reducing ends of (1-&gt;3)-beta-D-glucans, releasing alpha-glucose.. Functionally, major glucan 1,3-beta-glucosidase required for cell wall integrity. Beta-glucanases participate in the metabolism of beta-glucan, the main structural component of the cell wall. Can also function biosynthetically as a transglycosylase. Functions to deliver glucan from the cell to the extracellular matrix. Involved in cell-substrate and cell-cell adhesion. This is Probable glucan 1,3-beta-glucosidase ARB_04467 from Arthroderma benhamiae (strain ATCC MYA-4681 / CBS 112371) (Trichophyton mentagrophytes).